Here is a 403-residue protein sequence, read N- to C-terminus: Phosphoglycerate kinase (403 aa).

Substrate-binding positions include 21-23 (DFN), Arg36, 59-62 (HLGR), Arg119, and Arg154. ATP contacts are provided by residues Lys207, Gly299, Glu330, and 357–360 (GGDA).

This sequence belongs to the phosphoglycerate kinase family. In terms of assembly, monomer.

The protein localises to the cytoplasm. It catalyses the reaction (2R)-3-phosphoglycerate + ATP = (2R)-3-phospho-glyceroyl phosphate + ADP. It participates in carbohydrate degradation; glycolysis; pyruvate from D-glyceraldehyde 3-phosphate: step 2/5. This chain is Phosphoglycerate kinase, found in Chlamydia abortus (strain DSM 27085 / S26/3) (Chlamydophila abortus).